Consider the following 870-residue polypeptide: Phycobiliprotein ApcE (870 aa).

Residue cysteine 184 participates in (2R,3E)-phycocyanobilin binding. PBS-linker domains are found at residues 241–421, 482–665, and 679–856; these read DLQG…FRTI, GAGI…KIEK, and SSLN…KQNR.

This sequence belongs to the phycobilisome linker protein family. Contains one covalently linked bilin chromophore. This protein autochromophorylates (Potential).

It is found in the plastid. Its subcellular location is the chloroplast thylakoid membrane. In terms of biological role, this protein is postulated to act both as terminal energy acceptor and as a linker polypeptide that stabilizes the phycobilisome architecture. May have intrinsic bilin lyase activity. This chain is Phycobiliprotein ApcE (apcE), found in Cyanidium caldarium (Red alga).